Here is a 375-residue protein sequence, read N- to C-terminus: Myb family transcription factor PHL5 (375 aa).

The segment covering 159–171 (TSSQHQPKQSHPR) has biased composition (polar residues). The interval 159-178 (TSSQHQPKQSHPRFSSPPSF) is disordered. Positions 189 to 249 (CVNKTRIRWT…HLQKYRIAKY (61 aa)) constitute an HTH myb-type domain. A DNA-binding region (H-T-H motif) is located at residues 220-245 (PKAILKRMDSDGLTIFHVKSHLQKYR). The stretch at 279–299 (KEALQLQLDVQRHLHEQLEIQ) forms a coiled coil. The LHEQLE motif lies at 292 to 297 (LHEQLE).

Belongs to the MYB-CC family.

Its subcellular location is the nucleus. This chain is Myb family transcription factor PHL5, found in Arabidopsis thaliana (Mouse-ear cress).